A 396-amino-acid chain; its full sequence is uncharacterized protein (396 aa).

Helical transmembrane passes span 7-27 (SDDV…SIGL), 36-56 (AVSG…VGVL), 62-82 (VYDT…LFQI), 94-114 (LLFI…LAFF), 159-179 (VVAD…IPAL), 218-238 (IAFN…VSGY), 250-270 (GTLG…IFLF), 285-305 (TFLI…RLIV), 310-330 (LILL…LAAG), 340-360 (ILLA…MAIA), and 367-387 (VAPI…VGTF).

The protein resides in the cell membrane. This is an uncharacterized protein from Bacillus subtilis (strain 168).